A 235-amino-acid polypeptide reads, in one-letter code: Ribonuclease PH (235 aa).

Residues Arg86 and 124-126 contribute to the phosphate site; that span reads GTR.

It belongs to the RNase PH family. As to quaternary structure, homohexameric ring arranged as a trimer of dimers.

The enzyme catalyses tRNA(n+1) + phosphate = tRNA(n) + a ribonucleoside 5'-diphosphate. In terms of biological role, phosphorolytic 3'-5' exoribonuclease that plays an important role in tRNA 3'-end maturation. Removes nucleotide residues following the 3'-CCA terminus of tRNAs; can also add nucleotides to the ends of RNA molecules by using nucleoside diphosphates as substrates, but this may not be physiologically important. Probably plays a role in initiation of 16S rRNA degradation (leading to ribosome degradation) during starvation. The chain is Ribonuclease PH from Legionella pneumophila (strain Paris).